Consider the following 1015-residue polypeptide: DNA polymerase catalytic subunit (1015 aa).

It belongs to the DNA polymerase type-B family. As to quaternary structure, forms a complex with the ssDNA-binding protein BALF2, the DNA polymerase processivity factor BMRF1, and the alkaline exonuclease BGLF5. Interacts with the putative helicase-primase complex composed of BBLF4, BSLF1 and BBLF2/3 proteins; these interactions may coordinate leading and lagging strand DNA synthesis at the replication fork.

The protein resides in the host nucleus. The enzyme catalyses DNA(n) + a 2'-deoxyribonucleoside 5'-triphosphate = DNA(n+1) + diphosphate. Replicates viral genomic DNA in the late phase of lytic infection, producing long concatemeric DNA. The replication complex is composed of six viral proteins: the DNA polymerase, processivity factor, primase, primase-associated factor, helicase, and ssDNA-binding protein. The polypeptide is DNA polymerase catalytic subunit (Epstein-Barr virus (strain B95-8) (HHV-4)).